A 617-amino-acid chain; its full sequence is Vacuolar protein sorting-associated protein 33A (617 aa).

The segment at 268–287 (NFPSDGALPGGGGSGPRVEE) is disordered.

This sequence belongs to the STXBP/unc-18/SEC1 family. In terms of assembly, component of the class C core vacuole/endosome tethering (CORVET) complex composed of at least Vps8, dor/Vps18, car/Vps33A and Vps16A; unlike in other species, Vps11 is not part of the Drosophila complex. Due to the reduced number of components the Drosophila CORVET complex is often referred to as the miniCORVET complex. Interacts with ema. Component of the homotypic fusion and vacuole protein sorting (HOPS) complex, composed of Vps16A, car/Vps33A, dor/Vps18, Vps39, Vps11 and lt/Vps41. The tethering complex core made up of Vps16A, car/Vps33A and dor/Vps18 and shared by both HOPS and CORVET, preferentially associates with CORVET specific Vps8 over HOPS specific lt/Vps41. Interacts with Syx17 (via SNARE domain); the interaction requires Vps16A, may involve additional components of the HOPS complex and may promote assembly of the Syx17-Snap29-Vamp7 trans-SNARE complex.

Its subcellular location is the early endosome. The protein localises to the late endosome membrane. The protein resides in the lysosome membrane. In terms of biological role, core component of the class C core vacuole/endosome tethering (CORVET) and the homotypic fusion and vacuole protein sorting (HOPS) tethering complexes involved in endo-lysosomal vesicle trafficking and lysosome biogenesis. The CORVET complex facilitates docking and fusion of endosomal vesicles during endosome maturation, acts upstream of HOPS, but is not involved in autophagic flux. The CORVET complex may cooperate with the early endosomal tether Rbsn-5 to mediate endosomal fusion. The HOPS complex facilitates docking and fusion of lysosomes with late endosomes and several other types of vesicles. The HOPS complex is also involved in autophagy and crinophagy (the elimination of unused secretory granules through their fusion with lysosomes). The HOPS complex probably instigates autophagosome-lysosome fusion by binding autophagosome associated Syx17/syntaxin 17 and promoting assembly of the trans-SNARE complex. Independent of Syx17/syntaxin 17 HOPS is involved in biosynthetic transport to lysosomes and lysosome-related organelles such as eye-pigment granules. Required for endocytic degradation of boss/bride of sevenless and N/Notch in developing ommatidia. The sequence is that of Vacuolar protein sorting-associated protein 33A from Drosophila melanogaster (Fruit fly).